Consider the following 640-residue polypeptide: Threonine--tRNA ligase (640 aa).

The TGS domain maps to 1-61 (MPVITLPDGS…SNDATLQIIT (61 aa)). A catalytic region spans residues 242–533 (DHRKIGKQLD…LIEHYAGVFP (292 aa)). Zn(2+) contacts are provided by Cys-333, His-384, and His-510.

This sequence belongs to the class-II aminoacyl-tRNA synthetase family. In terms of assembly, homodimer. The cofactor is Zn(2+).

The protein resides in the cytoplasm. The catalysed reaction is tRNA(Thr) + L-threonine + ATP = L-threonyl-tRNA(Thr) + AMP + diphosphate + H(+). Catalyzes the attachment of threonine to tRNA(Thr) in a two-step reaction: L-threonine is first activated by ATP to form Thr-AMP and then transferred to the acceptor end of tRNA(Thr). Also edits incorrectly charged L-seryl-tRNA(Thr). In Pseudomonas putida (strain GB-1), this protein is Threonine--tRNA ligase.